Consider the following 136-residue polypeptide: Frataxin, mitochondrial (136 aa).

The protein belongs to the frataxin family. As to quaternary structure, monomer. Oligomer.

Its subcellular location is the mitochondrion. The enzyme catalyses 4 Fe(2+) + O2 + 4 H(+) = 4 Fe(3+) + 2 H2O. In terms of biological role, promotes the biosynthesis of heme as well as the assembly and repair of iron-sulfur clusters by delivering Fe(2+) to proteins involved in these pathways. May play a role in the protection against iron-catalyzed oxidative stress through its ability to catalyze the oxidation of Fe(2+) to Fe(3+). May be able to store large amounts of the metal in the form of a ferrihydrite mineral by oligomerization. In Caenorhabditis elegans, this protein is Frataxin, mitochondrial (frh-1).